Reading from the N-terminus, the 475-residue chain is Ataxin-10 (475 aa).

Omega-N-methylarginine is present on R10. The residue at position 12 (S12) is a Phosphoserine; by AURKB. S77 carries the phosphoserine; by PLK1 modification. Residue T82 is modified to Phosphothreonine; by PLK1. S430 carries the phosphoserine modification.

The protein belongs to the ataxin-10 family. As to quaternary structure, homooligomer. Interacts with GNB2. Interacts with IQCB1. Interacts with OGT. In terms of processing, polyubiquitinated. Post-translationally, phosphorylation at Ser-12 by AURKB promotes the association of ATXN10 with PLK1. Phosphorylation at Ser-77 and Thr-82 by PLK1 may play a role in the regulation of cytokinesis and may stimulate the proteasome-mediated degradation of ATXN10. As to expression, expressed in the central nervous system.

The protein localises to the cytoplasm. The protein resides in the perinuclear region. It localises to the midbody. It is found in the cytoskeleton. Its subcellular location is the cilium basal body. The protein localises to the microtubule organizing center. The protein resides in the centrosome. It localises to the centriole. Its function is as follows. May play a role in the regulation of cytokinesis. May play a role in signaling by stimulating protein glycosylation. Induces neuritogenesis by activating the Ras-MAP kinase pathway and is necessary for the survival of cerebellar neurons. Does not appear to play a major role in ciliogenesis. The chain is Ataxin-10 (ATXN10) from Homo sapiens (Human).